Here is a 670-residue protein sequence, read N- to C-terminus: Tyramine beta-hydroxylase (670 aa).

The span at 26 to 35 shows a compositional bias: basic residues; sequence HHQLAYHHHK. The interval 26 to 63 is disordered; that stretch reads HHQLAYHHHKQEQQQQQQQQQQQQAKQKQKQNGVQQGR. Residues 38–61 are compositionally biased toward low complexity; that stretch reads QQQQQQQQQQQQAKQKQKQNGVQQ. Residues 65-81 form a helical membrane-spanning segment; it reads PTFMPVMLLLLMATLLT. The region spanning 104–220 is the DOMON domain; it reads KEIKLSWMVD…GTMYVVWARG (117 aa). N-linked (GlcNAc...) asparagine glycosylation occurs at Asn235. Tyr281 is an active-site residue. Cystine bridges form between Cys283/Cys334 and Cys319/Cys344. Cu(2+)-binding residues include His312 and His313. Residues His382, His461, His463, and Met536 each contribute to the Cu(2+) site. Disulfide bonds link Cys439/Cys552, Cys443/Cys613, and Cys515/Cys537. Residue His461 is part of the active site. Asn614 is a glycosylation site (N-linked (GlcNAc...) asparagine).

Belongs to the copper type II ascorbate-dependent monooxygenase family. As to quaternary structure, is most likely a monomer under physiological conditions, although under conditions of high pH and low ionic strength the dimeric form predominates. Both forms are equally active. The cofactor is Cu(2+). As to expression, present in head and in neurons innervating the oviduct (at protein level).

The protein localises to the membrane. The enzyme catalyses tyramine + L-ascorbate + O2 = (R)-octopamine + L-dehydroascorbate + H2O. Functionally, catalyzes the hydroxylation of tyramine into octopamine, a neurotransmitter involved in ovulation and locomotion. Functions in an amine-mediated Bacc-dependent signaling pathway that negatively regulates acute ethanol sensitivity. Involved in facilitation of nociceptive escape behavior in response to potentially damaging stimuli, such as high temperatures. This Drosophila melanogaster (Fruit fly) protein is Tyramine beta-hydroxylase (Tbh).